Reading from the N-terminus, the 206-residue chain is Ras-related protein Ral-B (206 aa).

A GTP-binding site is contributed by 21–29 (GSGGVGKSA). Residues 43–51 (YEPTKADSY) carry the Effector region motif. GTP-binding positions include 68-72 (DTAGQ), 128-131 (NKSD), and 158-160 (SAK). A compositionally biased stretch (basic and acidic residues) spans 180 to 189 (KMSENKDKNG). The disordered stretch occupies residues 180–206 (KMSENKDKNGKKSSKNKKSFKERCCLL). Position 203 is a cysteine methyl ester (Cys-203). Residue Cys-203 is the site of S-geranylgeranyl cysteine attachment. The propeptide at 204–206 (CLL) is removed in mature form.

The protein belongs to the small GTPase superfamily. Ras family. Interacts with EXOC2/Sec5 and EXOC8/Exo84. Interacts (via effector domain) with RALBP1. In terms of processing, prenylation is essential for membrane localization. The farnesylated form confers resistance to the proapoptotic and anti-anchorage-dependent growth effects of some geranylgeranyltransferase I inhibitors.

The protein localises to the cell membrane. The protein resides in the midbody. It catalyses the reaction GTP + H2O = GDP + phosphate + H(+). Its activity is regulated as follows. Alternates between an inactive form bound to GDP and an active form bound to GTP. Activated by a guanine nucleotide-exchange factor (GEF) and inactivated by a GTPase-activating protein (GAP). Its function is as follows. Multifunctional GTPase involved in a variety of cellular processes including gene expression, cell migration, cell proliferation, oncogenic transformation and membrane trafficking. Accomplishes its multiple functions by interacting with distinct downstream effectors. Acts as a GTP sensor for GTP-dependent exocytosis of dense core vesicles. Required both to stabilize the assembly of the exocyst complex and to localize functional exocyst complexes to the leading edge of migrating cells. Required for suppression of apoptosis. In late stages of cytokinesis, upon completion of the bridge formation between dividing cells, mediates exocyst recruitment to the midbody to drive abscission. Involved in ligand-dependent receptor mediated endocytosis of the EGF and insulin receptors. The chain is Ras-related protein Ral-B (RALB) from Pongo abelii (Sumatran orangutan).